We begin with the raw amino-acid sequence, 445 residues long: Exodeoxyribonuclease 7 large subunit (445 aa).

The protein belongs to the XseA family. Heterooligomer composed of large and small subunits.

It is found in the cytoplasm. The catalysed reaction is Exonucleolytic cleavage in either 5'- to 3'- or 3'- to 5'-direction to yield nucleoside 5'-phosphates.. In terms of biological role, bidirectionally degrades single-stranded DNA into large acid-insoluble oligonucleotides, which are then degraded further into small acid-soluble oligonucleotides. This is Exodeoxyribonuclease 7 large subunit from Xanthomonas oryzae pv. oryzae (strain KACC10331 / KXO85).